Consider the following 408-residue polypeptide: NADH-quinone oxidoreductase subunit D (408 aa).

This sequence belongs to the complex I 49 kDa subunit family. In terms of assembly, NDH-1 is composed of 14 different subunits. Subunits NuoB, C, D, E, F, and G constitute the peripheral sector of the complex.

Its subcellular location is the cell inner membrane. It carries out the reaction a quinone + NADH + 5 H(+)(in) = a quinol + NAD(+) + 4 H(+)(out). Its function is as follows. NDH-1 shuttles electrons from NADH, via FMN and iron-sulfur (Fe-S) centers, to quinones in the respiratory chain. The immediate electron acceptor for the enzyme in this species is believed to be ubiquinone. Couples the redox reaction to proton translocation (for every two electrons transferred, four hydrogen ions are translocated across the cytoplasmic membrane), and thus conserves the redox energy in a proton gradient. This chain is NADH-quinone oxidoreductase subunit D, found in Campylobacter hominis (strain ATCC BAA-381 / DSM 21671 / CCUG 45161 / LMG 19568 / NCTC 13146 / CH001A).